The following is a 418-amino-acid chain: MRAERMSPLLALGLLVSGLCSRVHCLPENVTPEERHKGTSVDGHSLASSNTDFAFSLYKQLALKNPNKNVIFSPLSISIALAFLSLGARGPTVTEILEGLKFNLTETLEREIHQGFQHLLQMLSRPSNELQLSVGNTMFVQEQLKLLDKFREDALALYTSEAFSTNFKDPETAKSLINDYVKNKTRGKIVDLFKDLDPLTKVILVNYIYFKAQWRTPFDPKQTYKSQFHVSKNKTVEVPMMSIGDLVTPYFRDEELDCTLVELTYTSNDSALFILPDEGKMQDLEAKLIPEMLTRWRESLYPRGIHELNLPRFSIATDYKLKDILSQLEIKKVFTQEADLSGITDDHELEVSQVVHKAVLDVGEEGTEGAAATGVKVGITSINNHIPLSFNRPFLIAIVLKDTQSIIFLGKVTNPSQA.

Residues 1–25 (MRAERMSPLLALGLLVSGLCSRVHC) form the signal peptide. Asparagine 103, asparagine 183, asparagine 233, and asparagine 268 each carry an N-linked (GlcNAc...) asparagine glycan.

Belongs to the serpin family. Homodimer.

The protein resides in the cytoplasmic vesicle. The protein localises to the secretory vesicle. It is found in the chromaffin granule. Its subcellular location is the secreted. In terms of biological role, serine protease inhibitor. This chain is Serpin A3-8, found in Bos taurus (Bovine).